Here is a 328-residue protein sequence, read N- to C-terminus: Mitochondrial GTPase 1 (328 aa).

The CP-type G domain maps to 10 to 199 (KTTLKRLRDS…MVDTPGIMLP (190 aa)). GTP is bound by residues 57–60 (NKCD), 143–148 (NVGKSS), and Gly-195.

The protein belongs to the TRAFAC class YlqF/YawG GTPase family. MTG1 subfamily.

The protein localises to the mitochondrion inner membrane. Functionally, mitochondrial GTPase involved in assembly of the large ribosomal subunit. Plays a role in expression of the mitochondrial translational machinery. In Schizosaccharomyces japonicus (strain yFS275 / FY16936) (Fission yeast), this protein is Mitochondrial GTPase 1.